The primary structure comprises 234 residues: CKLF-like MARVEL transmembrane domain-containing protein 4 (234 aa).

A compositionally biased stretch (acidic residues) spans 1–11 (MRSGEELDGFE). Positions 1–38 (MRSGEELDGFEGEASSTSMISGASSPYQPTTEPVSQRR) are disordered. Residues 15-25 (SSTSMISGASS) are compositionally biased toward low complexity. Residues 49 to 176 (YLRGALGRLK…NTFLAVQKWR (128 aa)) enclose the MARVEL domain. The next 4 helical transmembrane spans lie at 59 to 79 (VAQV…MACS), 85 to 105 (YFFE…LIMF), 123 to 143 (LVNT…LAAL), and 151 to 171 (IAAV…TFLA). Residue serine 194 is modified to Phosphoserine.

Belongs to the chemokine-like factor family. As to quaternary structure, interacts with PD-L1/CD274 and CMTM6. As to expression, highly expressed in testis and prostate.

It is found in the membrane. In terms of biological role, acts as a backup for CMTM6 to regulate plasma membrane expression of PD-L1/CD274, an immune inhibitory ligand critical for immune tolerance to self and antitumor immunity. May protect PD-L1/CD274 from being polyubiquitinated and targeted for degradation. In Homo sapiens (Human), this protein is CKLF-like MARVEL transmembrane domain-containing protein 4.